The sequence spans 683 residues: DNA-directed RNA polymerase subunit beta' (683 aa).

Residues cysteine 69, cysteine 71, cysteine 87, and cysteine 90 each contribute to the Zn(2+) site. Mg(2+)-binding residues include aspartate 489, aspartate 491, and aspartate 493.

It belongs to the RNA polymerase beta' chain family. RpoC1 subfamily. In plastids the minimal PEP RNA polymerase catalytic core is composed of four subunits: alpha, beta, beta', and beta''. When a (nuclear-encoded) sigma factor is associated with the core the holoenzyme is formed, which can initiate transcription. Requires Mg(2+) as cofactor. It depends on Zn(2+) as a cofactor.

Its subcellular location is the plastid. It is found in the chloroplast. The catalysed reaction is RNA(n) + a ribonucleoside 5'-triphosphate = RNA(n+1) + diphosphate. Functionally, DNA-dependent RNA polymerase catalyzes the transcription of DNA into RNA using the four ribonucleoside triphosphates as substrates. This chain is DNA-directed RNA polymerase subunit beta', found in Sorghum bicolor (Sorghum).